The primary structure comprises 512 residues: Beta-glucosidase 44 (512 aa).

The signal sequence occupies residues 1–23; that stretch reads MRHLSSPPWPLLLLLLLSSFTSG. Gln-58 lines the a beta-D-glucoside pocket. N-linked (GlcNAc...) asparagine glycosylation is present at Asn-86. Residues His-159 and 204–205 each bind a beta-D-glucoside; that span reads NE. Catalysis depends on Glu-205, which acts as the Proton donor. Residues Cys-224 and Cys-231 are joined by a disulfide bond. A glycan (N-linked (GlcNAc...) asparagine) is linked at Asn-230. A beta-D-glucoside is bound by residues Tyr-347 and Glu-419. The active-site Nucleophile is Glu-419. Asn-427 carries N-linked (GlcNAc...) asparagine glycosylation. Residues Trp-466, 473–474, and Phe-482 each bind a beta-D-glucoside; that span reads EW.

This sequence belongs to the glycosyl hydrolase 1 family. In terms of assembly, homodimer.

It is found in the secreted. The catalysed reaction is Hydrolysis of terminal, non-reducing beta-D-glucosyl residues with release of beta-D-glucose.. In terms of biological role, hydrolyzes p-nitrophenyl beta-D-glucoside, p-nitrophenyl beta-D-mannoside, cellobiose, 4-methylumbelliferyl-beta-D-glucoside, laminarin, amygdalin, esculin and gentiobiose. The chain is Beta-glucosidase 44 from Arabidopsis thaliana (Mouse-ear cress).